A 310-amino-acid chain; its full sequence is 4-diphosphocytidyl-2-C-methyl-D-erythritol kinase (310 aa).

Residue Lys-12 is part of the active site. Residue Pro-97–Ser-107 coordinates ATP. Residue Asp-139 is part of the active site.

This sequence belongs to the GHMP kinase family. IspE subfamily.

The catalysed reaction is 4-CDP-2-C-methyl-D-erythritol + ATP = 4-CDP-2-C-methyl-D-erythritol 2-phosphate + ADP + H(+). It participates in isoprenoid biosynthesis; isopentenyl diphosphate biosynthesis via DXP pathway; isopentenyl diphosphate from 1-deoxy-D-xylulose 5-phosphate: step 3/6. Functionally, catalyzes the phosphorylation of the position 2 hydroxy group of 4-diphosphocytidyl-2C-methyl-D-erythritol. The protein is 4-diphosphocytidyl-2-C-methyl-D-erythritol kinase of Synechococcus sp. (strain CC9311).